The chain runs to 170 residues: Adenine phosphoribosyltransferase (170 aa).

It belongs to the purine/pyrimidine phosphoribosyltransferase family. In terms of assembly, homodimer.

The protein localises to the cytoplasm. It carries out the reaction AMP + diphosphate = 5-phospho-alpha-D-ribose 1-diphosphate + adenine. It participates in purine metabolism; AMP biosynthesis via salvage pathway; AMP from adenine: step 1/1. Catalyzes a salvage reaction resulting in the formation of AMP, that is energically less costly than de novo synthesis. The protein is Adenine phosphoribosyltransferase of Lactococcus lactis subsp. cremoris (strain SK11).